The following is a 319-amino-acid chain: ADP-L-glycero-D-manno-heptose-6-epimerase (319 aa).

NADP(+) contacts are provided by residues 10–11 (FI), 31–32 (DD), Lys-38, Lys-53, and 75–79 (EGACS). Tyr-139 (proton acceptor) is an active-site residue. Lys-143 is a binding site for NADP(+). Position 168 (Asn-168) interacts with substrate. Residues Val-169 and Lys-177 each contribute to the NADP(+) site. Lys-177 serves as the catalytic Proton acceptor. Substrate contacts are provided by residues Ser-179, His-186, 200–203 (FEGA), Arg-213, and Tyr-281.

The protein belongs to the NAD(P)-dependent epimerase/dehydratase family. HldD subfamily. In terms of assembly, homopentamer. NADP(+) is required as a cofactor.

The catalysed reaction is ADP-D-glycero-beta-D-manno-heptose = ADP-L-glycero-beta-D-manno-heptose. It participates in nucleotide-sugar biosynthesis; ADP-L-glycero-beta-D-manno-heptose biosynthesis; ADP-L-glycero-beta-D-manno-heptose from D-glycero-beta-D-manno-heptose 7-phosphate: step 4/4. Catalyzes the interconversion between ADP-D-glycero-beta-D-manno-heptose and ADP-L-glycero-beta-D-manno-heptose via an epimerization at carbon 6 of the heptose. The sequence is that of ADP-L-glycero-D-manno-heptose-6-epimerase from Aromatoleum aromaticum (strain DSM 19018 / LMG 30748 / EbN1) (Azoarcus sp. (strain EbN1)).